Here is a 542-residue protein sequence, read N- to C-terminus: MAAKEVKFTSDARDRMLRGVDIMANAVRVTLGPKGRNVVIDKSFGAPRITKDGVSVAKEIELEDKFENMGAQMLREVASRTSDIAGDGTTTATVLAQAIVREGAKAVASGMNPMDLKRGIDLAVEAIVKELRNNARKVSKNAEIAQVATISANGDAEIGRYLAEAMEKVGNEGVITVEEAKTAEIELEVVEGMEFDRGYLSPYFITNQEKMRVELEDAYILLHEKKLSNLQAMIPILESVIQSGKPLLIIAEDVEGEALATLVVNKLRGGLKIAAVKAPGFGDRRKSMLEDIAILTGGTVISEELGIKLENTTMDTLGRAKRIMVDKETTTIVDGAGSKEDIGGRVAQIKAQIEDTTSDYDREKLQERLAKLAGGVAVIRVGGSTEVEVKEKKDRVDDALHATRAAVEEGILPGGGVALLRVVSALNGLATANDDQRVGIEIVRRAIEAPVRQIAENAGAEGSIIVGKLREKQDFAFGWNAQTGEFGDLFQMGVIDPAKVVRAALQDAASIAGLLVTTEAMIAEKPKKDGQPQMPPGGGMDF.

ATP-binding positions include 30-33 (TLGP), lysine 51, 87-91 (DGTTT), glycine 415, and aspartate 496.

It belongs to the chaperonin (HSP60) family. Forms a cylinder of 14 subunits composed of two heptameric rings stacked back-to-back. Interacts with the co-chaperonin GroES.

It is found in the cytoplasm. It carries out the reaction ATP + H2O + a folded polypeptide = ADP + phosphate + an unfolded polypeptide.. Its function is as follows. Together with its co-chaperonin GroES, plays an essential role in assisting protein folding. The GroEL-GroES system forms a nano-cage that allows encapsulation of the non-native substrate proteins and provides a physical environment optimized to promote and accelerate protein folding. This chain is Chaperonin GroEL 2, found in Rhizobium meliloti (strain 1021) (Ensifer meliloti).